The sequence spans 94 residues: Small ribosomal subunit protein bS18 (94 aa).

Residues 1–12 (MSEQNSRPQNSE) show a composition bias toward low complexity. The interval 1-29 (MSEQNSRPQNSERPQRSRRPQGGPRRRRK) is disordered. Positions 16–29 (RSRRPQGGPRRRRK) are enriched in basic residues.

Belongs to the bacterial ribosomal protein bS18 family. As to quaternary structure, part of the 30S ribosomal subunit. Forms a tight heterodimer with protein bS6.

In terms of biological role, binds as a heterodimer with protein bS6 to the central domain of the 16S rRNA, where it helps stabilize the platform of the 30S subunit. The protein is Small ribosomal subunit protein bS18 of Leuconostoc mesenteroides subsp. mesenteroides (strain ATCC 8293 / DSM 20343 / BCRC 11652 / CCM 1803 / JCM 6124 / NCDO 523 / NBRC 100496 / NCIMB 8023 / NCTC 12954 / NRRL B-1118 / 37Y).